A 427-amino-acid polypeptide reads, in one-letter code: ATP-sensitive inward rectifier potassium channel 12 (427 aa).

At 1 to 77 (MTASGRTNPY…LADMFTTCVD (77 aa)) the chain is on the cytoplasmic side. An S-nitrosocysteine modification is found at Cys-75. A helical membrane pass occupies residues 78–104 (IRWRYMLLIFSLAFLASWLLFGVIFWV). 2 residues coordinate a 1,2-diacyl-sn-glycero-3-phospho-(1D-myo-inositol-4,5-bisphosphate): Arg-79 and Arg-81. Residues 105–129 (IAVAHGDLEPAEAHGRTPCVLQVHG) are Extracellular-facing. A disulfide bridge connects residues Cys-123 and Cys-155. Residues 130–146 (FMAAFLFSIETQTTIGY) constitute an intramembrane region (helical; Pore-forming). K(+) is bound by residues Thr-143, Ile-144, Gly-145, and Tyr-146. The short motif at 143–148 (TIGYGL) is the Selectivity filter element. The Extracellular segment spans residues 147-155 (GLRCVTEEC). Residues 156 to 183 (PVAVFMVVAQSIVGCIIDSFMIGAIMAK) traverse the membrane as a helical segment. A 1,2-diacyl-sn-glycero-3-phospho-(1D-myo-inositol-4,5-bisphosphate) contacts are provided by Lys-183 and Lys-188. Residues 184 to 427 (MARPKKRAQT…QRPYRRESEI (244 aa)) lie on the Cytoplasmic side of the membrane. The span at 387–396 (DEEDEVDGEQ) shows a compositional bias: acidic residues. The tract at residues 387 to 427 (DEEDEVDGEQDSLGPQARRDFDRPQAGTALEQRPYRRESEI) is disordered. A PDZ-binding motif is present at residues 425–427 (SEI).

Belongs to the inward rectifier-type potassium channel (TC 1.A.2.1) family. KCNJ12 subfamily. In terms of assembly, homotetramer. Forms heteromer with KCNJ4. Association, via its PDZ-recognition domain, with LIN7A, LIN7B, LIN7C, DLG1, CASK and APBA1 plays a key role in its localization and trafficking.

The protein localises to the membrane. The enzyme catalyses K(+)(in) = K(+)(out). Its activity is regulated as follows. Activated by phosphatidylinositol 4,5-biphosphate (PtdIns(4,5)P2). PtdIns(4,5)P2 binding to the cytoplasmic side of the channel triggers a conformation change leading to channel opening. In terms of biological role, inward rectifying potassium channel that probably participates in controlling the resting membrane potential in electrically excitable cells. Probably participates in establishing action potential waveform and excitability of neuronal and muscle tissues. Inward rectifier potassium channels are characterized by a greater tendency to allow potassium to flow into the cell rather than out of it. Their voltage dependence is regulated by the concentration of extracellular potassium; as external potassium is raised, the voltage range of the channel opening shifts to more positive voltages. The inward rectification is mainly due to the blockage of outward current by internal magnesium. This chain is ATP-sensitive inward rectifier potassium channel 12 (KCNJ12), found in Bos taurus (Bovine).